Consider the following 59-residue polypeptide: Large ribosomal subunit protein uL30 (59 aa).

It belongs to the universal ribosomal protein uL30 family. Part of the 50S ribosomal subunit.

The polypeptide is Large ribosomal subunit protein uL30 (Buchnera aphidicola subsp. Acyrthosiphon kondoi (Acyrthosiphon kondoi symbiotic bacterium)).